Consider the following 507-residue polypeptide: Monocarboxylate transporter 9 (507 aa).

Topologically, residues Met1–Gly12 are extracellular. Residues Trp13–Val33 form a helical membrane-spanning segment. The Cytoplasmic portion of the chain corresponds to Gly34 to Ala52. The chain crosses the membrane as a helical span at residues Trp53–Val73. Topologically, residues Ser74–Arg79 are extracellular. A helical transmembrane segment spans residues Pro80 to Pro100. Residues Asn101–Ile102 are Cytoplasmic-facing. A helical membrane pass occupies residues Tyr103–Ala123. The Extracellular portion of the chain corresponds to Thr124 to Arg136. Residues Gly137–Leu157 traverse the membrane as a helical segment. At Gln158 to Glu163 the chain is on the cytoplasmic side. Residues Leu164–Cys184 form a helical membrane-spanning segment. The Extracellular segment spans residues Gly185–Arg302. A helical transmembrane segment spans residues Val303 to Leu323. Residues Leu324 to His340 lie on the Cytoplasmic side of the membrane. The chain crosses the membrane as a helical span at residues Met341–Leu361. Topologically, residues Ala362–Thr369 are extracellular. Residues Leu370–Ala390 form a helical membrane-spanning segment. Topologically, residues Arg391–Thr395 are cytoplasmic. The helical transmembrane segment at Leu396–Val416 threads the bilayer. The Extracellular portion of the chain corresponds to Thr417 to Tyr430. A helical transmembrane segment spans residues Gly431–Phe451. Residues Tyr452–Thr460 are Cytoplasmic-facing. The helical transmembrane segment at Ala461–Leu481 threads the bilayer. Topologically, residues Pro482–Ala507 are extracellular.

It belongs to the major facilitator superfamily. Monocarboxylate porter (TC 2.A.1.13) family.

The protein localises to the cell membrane. It carries out the reaction creatine(in) = creatine(out). The catalysed reaction is (R)-carnitine(in) = (R)-carnitine(out). In terms of biological role, extracellular pH-and Na(+)-sensitive low-affinity creatine transporter. Also functions as a pH-independent carnitine efflux transporter. This is Monocarboxylate transporter 9 (SLC16A9) from Gallus gallus (Chicken).